Reading from the N-terminus, the 131-residue chain is D-ribose pyranase (131 aa).

H20 serves as the catalytic Proton donor. Substrate is bound by residues D28, H98, and 120–122; that span reads YAN.

This sequence belongs to the RbsD / FucU family. RbsD subfamily. In terms of assembly, homodecamer.

The protein resides in the cytoplasm. The catalysed reaction is beta-D-ribopyranose = beta-D-ribofuranose. Its pathway is carbohydrate metabolism; D-ribose degradation; D-ribose 5-phosphate from beta-D-ribopyranose: step 1/2. Catalyzes the interconversion of beta-pyran and beta-furan forms of D-ribose. The polypeptide is D-ribose pyranase (Bacillus anthracis (strain A0248)).